The following is a 436-amino-acid chain: Diaminobutyrate--2-oxoglutarate transaminase (436 aa).

Position 269 is an N6-(pyridoxal phosphate)lysine (K269).

It belongs to the class-III pyridoxal-phosphate-dependent aminotransferase family. It depends on pyridoxal 5'-phosphate as a cofactor.

The enzyme catalyses L-2,4-diaminobutanoate + 2-oxoglutarate = L-aspartate 4-semialdehyde + L-glutamate. It participates in amine and polyamine biosynthesis; ectoine biosynthesis; L-ectoine from L-aspartate 4-semialdehyde: step 1/3. Functionally, catalyzes reversively the conversion of L-aspartate beta-semialdehyde (ASA) to L-2,4-diaminobutyrate (DABA) by transamination with L-glutamate. This Nocardia farcinica (strain IFM 10152) protein is Diaminobutyrate--2-oxoglutarate transaminase (ectB).